A 403-amino-acid polypeptide reads, in one-letter code: MALRTLDSLGSLAGKRVVVRCDLNVPLKDGKITDDGRVRASIPTLHALIAQGAKVAIVSHLGRPEGAPDAQYSLAPVAQRLSELLGKPVTFASDTVGAGAAEAVSGLEDGDVALLENLRFNPGETSKDEGEREAFAAELAAFGDAFVSDGFGVVHRKQASVYELAKALPSAAGALIATELDVLDRLTENPERPYTVLLGGSKVSDKLGVIGHLLPRVDSLLIGGGMLFTFLAALGHRVGSSLLEADQIGTVKGYLEQAKQLGVEIVLPRDVVVASRFGVDAEHLVRPVDRIEDTGWGTSGLGLDIGPETAEVFSERIRAARTVFWNGPMGVFELAPFAAGTKAVAQALTEVDGLGVVGGGDSAAAVHALGFSDDQFGHISTGGGASLEFLEGKRLPGLEVLGW.

Substrate is bound by residues 22 to 24, arginine 37, 60 to 63, arginine 119, and arginine 156; these read DLN and HLGR. Residues lysine 206, glycine 302, glutamate 333, and 359-362 contribute to the ATP site; that span reads GGDS.

This sequence belongs to the phosphoglycerate kinase family. Monomer.

Its subcellular location is the cytoplasm. It carries out the reaction (2R)-3-phosphoglycerate + ATP = (2R)-3-phospho-glyceroyl phosphate + ADP. The protein operates within carbohydrate degradation; glycolysis; pyruvate from D-glyceraldehyde 3-phosphate: step 2/5. This chain is Phosphoglycerate kinase, found in Leifsonia xyli subsp. xyli (strain CTCB07).